The chain runs to 242 residues: Alpha-aspartyl dipeptidase (242 aa).

Residues Ser-125, Asp-140, and His-162 each act as charge relay system in the active site.

This sequence belongs to the peptidase S51 family.

It localises to the cytoplasm. It carries out the reaction Dipeptidase E catalyzes the hydrolysis of dipeptides Asp-|-Xaa. It does not act on peptides with N-terminal Glu, Asn or Gln, nor does it cleave isoaspartyl peptides.. In terms of biological role, hydrolyzes dipeptides containing N-terminal aspartate residues. This Xenopus laevis (African clawed frog) protein is Alpha-aspartyl dipeptidase (aad-a).